We begin with the raw amino-acid sequence, 393 residues long: Branched-chain-amino-acid aminotransferase, mitochondrial (393 aa).

The transit peptide at 1-16 directs the protein to the mitochondrion; the sequence is MLQRHSLKLGKFSIRT. Residue Lys-219 is modified to N6-(pyridoxal phosphate)lysine. Residue Thr-315 is modified to Phosphothreonine.

This sequence belongs to the class-IV pyridoxal-phosphate-dependent aminotransferase family. The cofactor is pyridoxal 5'-phosphate.

The protein localises to the mitochondrion matrix. The enzyme catalyses L-leucine + 2-oxoglutarate = 4-methyl-2-oxopentanoate + L-glutamate. The catalysed reaction is L-isoleucine + 2-oxoglutarate = (S)-3-methyl-2-oxopentanoate + L-glutamate. It catalyses the reaction L-valine + 2-oxoglutarate = 3-methyl-2-oxobutanoate + L-glutamate. It carries out the reaction a 2-oxocarboxylate + L-methionine = 4-methylsulfanyl-2-oxobutanoate + an L-alpha-amino acid. It functions in the pathway amino-acid biosynthesis; L-isoleucine biosynthesis; L-isoleucine from 2-oxobutanoate: step 4/4. Its pathway is amino-acid biosynthesis; L-leucine biosynthesis; L-leucine from 3-methyl-2-oxobutanoate: step 4/4. It participates in amino-acid biosynthesis; L-valine biosynthesis; L-valine from pyruvate: step 4/4. The protein operates within amino-acid biosynthesis; L-methionine biosynthesis via salvage pathway; L-methionine from S-methyl-5-thio-alpha-D-ribose 1-phosphate: step 6/6. Functionally, mitochondrial isozyme of branched-chain-amino-acid aminotransferase, involved in the biosynthesis of the branched chain amino acids (BCAAs) leucine, isoleucine, and valine. Catalyzes the formation of methionine from 2-keto-4-methylthiobutyrate (KMTB) in the methionine salvage pathway primarily using BCAAs (leucine, isoleucine, and valine) as the amino donors. Appears to be involved in the regulation of the cell cycle, although this may be indirect via metabolic changes. Connects BCAAs and TCA-cycle metabolism governing TCA-cycle flux to activate TORC1 signaling. High copy suppressor of a temperature-sensitive mutation in the ABC transporter, ATM1. The chain is Branched-chain-amino-acid aminotransferase, mitochondrial from Saccharomyces cerevisiae (strain ATCC 204508 / S288c) (Baker's yeast).